The chain runs to 89 residues: Small ribosomal subunit protein uS14 (89 aa).

This sequence belongs to the universal ribosomal protein uS14 family. As to quaternary structure, part of the 30S ribosomal subunit. Contacts proteins S3 and S10.

Binds 16S rRNA, required for the assembly of 30S particles and may also be responsible for determining the conformation of the 16S rRNA at the A site. This is Small ribosomal subunit protein uS14 from Oenococcus oeni (strain ATCC BAA-331 / PSU-1).